We begin with the raw amino-acid sequence, 368 residues long: Forkhead box protein I2 (368 aa).

The disordered stretch occupies residues 33 to 54; it reads QNQQLPQRPAAPPALGYGRNEY. The fork-head DNA-binding region spans 124–218; it reads RPPYSYSSLI…DNGNFRRKRK (95 aa). Residues 243–272 are disordered; the sequence is SLGSDSPRGASALEQSSYGTPESKSRPAGG. Polar residues predominate over residues 255–264; the sequence is LEQSSYGTPE.

The protein localises to the nucleus. Possible transcriptional activator. This Xenopus tropicalis (Western clawed frog) protein is Forkhead box protein I2.